The chain runs to 85 residues: MDISRTEQRILHLMAQGGRIEIIRDDNRKIENVSCFTRDGWLYPGVDLDLFRRLKRLKAIKSSGGQPYRITERGLRLVRSQLDNR.

This sequence belongs to the UPF0386 family.

This chain is UPF0386 protein RHE_CH01859, found in Rhizobium etli (strain ATCC 51251 / DSM 11541 / JCM 21823 / NBRC 15573 / CFN 42).